A 67-amino-acid polypeptide reads, in one-letter code: Large ribosomal subunit protein uL29 (67 aa).

The protein belongs to the universal ribosomal protein uL29 family.

This Methanothrix thermoacetophila (strain DSM 6194 / JCM 14653 / NBRC 101360 / PT) (Methanosaeta thermophila) protein is Large ribosomal subunit protein uL29.